We begin with the raw amino-acid sequence, 309 residues long: Malate dehydrogenase (309 aa).

Residues 10-15 and Asp34 each bind NAD(+); that span reads GAGNVG. Arg83 and Arg89 together coordinate substrate. NAD(+) is bound by residues Asn96 and 119–121; that span reads VTN. Substrate contacts are provided by Asn121 and Arg152. Catalysis depends on His176, which acts as the Proton acceptor.

Belongs to the LDH/MDH superfamily. MDH type 3 family.

It carries out the reaction (S)-malate + NAD(+) = oxaloacetate + NADH + H(+). Functionally, catalyzes the reversible oxidation of malate to oxaloacetate. This Desulforudis audaxviator (strain MP104C) protein is Malate dehydrogenase.